The following is a 917-amino-acid chain: MKFEKGKVRILPKPSPTPTNPQTPLPLLPAQTKPVNSKRKSAASTPGNESKKSRKSNSTASTPNSATPTSVGTPPQKTSKPTGHRPVTSCTFCRQHKIKCNASDNYPNPCERCKKMGLKCEIDPEFRPRKGSQIQSLKSDVDELKAKIEMLTKNESLLTQALNQHNLNHASQQQQSSGSQSQQQHPPNPQRALSYTSANSSPQVAFSNASPIPSVTSIQQNAPLTHENSDNSPYALNTPENIEELQPISEFILGDVTLPLNRANELHDKFMTTHLPFLPIIISRSATELYHKSQLLFWAVILTASLSEPEPKLYMSLASLIKQLAIETCWIKTPRSTHVIQALIILSIWPLPNEKVLDDCSYRFVGLAKNLSLQLGLHRGGEFIQEFSRNQVSLGPDAERWRTRSWLAVFFCEQFWSSLLGLPPSINTTDYLLENARVDKSLPKNFRCLISLSIFQCKLVNIMGISVTRPDGLLEPSNRAGSLSLLDRELERLRFKLQFEEGGPIEVYYLYIKLMICCFAFLPGTPIEDQVKYVSFAYLSATRIVTIVSKMVNDISLIELPIYIRQAVTYSVFMLFKLHLSRYLIDKYVDSARQSIVTVHRLFRNTLSSWKDLQNDISRTAKVLENLNMVLYNYPEIFLNDSENEDSSIITRMRSHLTASLFYDLVWCVHEARRRSVLDKGKRQAQPNKKILPLPFYNQITKDDFKTITTTSPNGTTITTLVPTDQAMNQAKSKSFDSSKPLEINGIPLPMLEATGSTREVLDSLPSQSLPSQAPTLQQYPMQQDQQQQEPSQQQQQKHSQQSQQYQQQQQSNQQQPHLQHQRQFQQSPPPQFSMISSTPPLQQPPFILANSPLPQTYLPKIDEMNMSPEVKQENSVAPFASQITNFFDQQTSGWFNNDNQDDDFLGWFDVNMMQEK.

The segment at Met-1 to Thr-88 is disordered. Residues Lys-13–Leu-27 show a composition bias toward pro residues. The segment covering Ser-56–Ser-70 has biased composition (low complexity). Polar residues predominate over residues Val-71–Pro-81. Positions Cys-90–Cys-120 form a DNA-binding region, zn(2)-C6 fungal-type. Residues Arg-129–Gln-164 are a coiled coil. 2 disordered regions span residues Asn-168–Ile-212 and Gln-778–Leu-849. The segment covering Ser-171 to Gln-184 has biased composition (low complexity). A compositionally biased stretch (polar residues) spans Arg-191 to Ile-212. Positions Gln-778–Gln-827 are enriched in low complexity.

Interacts with SSN3 and SFU1. In terms of processing, phosphorylated by SSN3 under iron-depleted conditions which leads to nuclear localization.

Its subcellular location is the cytoplasm. It is found in the nucleus. In terms of biological role, transcription factor which plays an essential role in virulence by activating the transcription of iron uptake genes such as FRE7 in iron-poor environments such as the host bloodstream and internal organs. Promotes commensalism in a mouse model of gastrointestinal infection. This Candida albicans (strain SC5314 / ATCC MYA-2876) (Yeast) protein is Transcriptional regulatory protein SEF1 (SEF1).